A 792-amino-acid chain; its full sequence is Xaa-Pro dipeptidyl-peptidase (792 aa).

Residues Ser363, Asp482, and His513 each act as charge relay system in the active site.

The protein belongs to the peptidase S15 family. As to quaternary structure, homodimer.

Its subcellular location is the cytoplasm. It catalyses the reaction Hydrolyzes Xaa-Pro-|- bonds to release unblocked, N-terminal dipeptides from substrates including Ala-Pro-|-p-nitroanilide and (sequentially) Tyr-Pro-|-Phe-Pro-|-Gly-Pro-|-Ile.. In terms of biological role, removes N-terminal dipeptides sequentially from polypeptides having unsubstituted N-termini provided that the penultimate residue is proline. The polypeptide is Xaa-Pro dipeptidyl-peptidase (Lactobacillus delbrueckii subsp. bulgaricus (strain ATCC BAA-365 / Lb-18)).